A 270-amino-acid polypeptide reads, in one-letter code: Type III pantothenate kinase (270 aa).

19–26 (DIGNTSTT) provides a ligand contact to ATP. Substrate is bound by residues tyrosine 109 and 116–119 (GADR). Aspartate 118 acts as the Proton acceptor in catalysis. A K(+)-binding site is contributed by aspartate 139. Threonine 142 lines the ATP pocket. Threonine 194 is a substrate binding site.

Belongs to the type III pantothenate kinase family. As to quaternary structure, homodimer. The cofactor is NH4(+). K(+) is required as a cofactor.

Its subcellular location is the cytoplasm. It catalyses the reaction (R)-pantothenate + ATP = (R)-4'-phosphopantothenate + ADP + H(+). The protein operates within cofactor biosynthesis; coenzyme A biosynthesis; CoA from (R)-pantothenate: step 1/5. In terms of biological role, catalyzes the phosphorylation of pantothenate (Pan), the first step in CoA biosynthesis. This is Type III pantothenate kinase from Chlorobaculum tepidum (strain ATCC 49652 / DSM 12025 / NBRC 103806 / TLS) (Chlorobium tepidum).